A 283-amino-acid polypeptide reads, in one-letter code: Calpastatin (283 aa).

The segment covering 1 to 15 has biased composition (polar residues); the sequence is MNPTETKAIPVSQQM. 2 disordered regions span residues 1–186 and 212–283; these read MNPT…SDPM and NEGI…KVEK. Positions 21–30 are enriched in basic residues; sequence PNKKKHKKQA. Residue Lys32 forms a Glycyl lysine isopeptide (Lys-Gly) (interchain with G-Cter in SUMO2) linkage. Residues 46–65 show a composition bias toward basic and acidic residues; it reads VVHEKKSQEGKPKEHTEQKS. Position 50 is an N6-acetyllysine (Lys50). Ser87 bears the Phosphoserine mark. Low complexity predominate over residues 107–122; that stretch reads VSAGGESVAGVAATSG. Ser133 carries the post-translational modification Phosphoserine. At Thr135 the chain carries Phosphothreonine. An Inhibitory domain 1 repeat occupies 170-222; it reads IEEENTTYTGPEVSDPMSSTYIEELGKREVTIPPKYRELLAKNEGITGPPADS. Residues Ser222 and Ser243 each carry the phosphoserine modification. Over residues 249 to 258 the composition is skewed to basic and acidic residues; it reads KKTEKEESTE.

The protein belongs to the protease inhibitor I27 (calpastatin) family.

Its function is as follows. Specific inhibition of calpain (calcium-dependent cysteine protease). Plays a key role in postmortem tenderization of meat and have been proposed to be involved in muscle protein degradation in living tissue. The protein is Calpastatin (CAST) of Chlorocebus aethiops (Green monkey).